Reading from the N-terminus, the 106-residue chain is Iron-sulfur cluster assembly protein CyaY (106 aa).

This sequence belongs to the frataxin family.

Its function is as follows. Involved in iron-sulfur (Fe-S) cluster assembly. May act as a regulator of Fe-S biogenesis. The chain is Iron-sulfur cluster assembly protein CyaY from Dickeya chrysanthemi (Pectobacterium chrysanthemi).